Reading from the N-terminus, the 224-residue chain is UPF0441 protein ECA0329 (224 aa).

Positions 180 to 224 (TALAPKPATTSTITRGGFGETVAKQNSMQRSSASSNSSSSRSMGG) are disordered. Over residues 204–224 (QNSMQRSSASSNSSSSRSMGG) the composition is skewed to low complexity.

This sequence belongs to the UPF0441 family.

This chain is UPF0441 protein ECA0329, found in Pectobacterium atrosepticum (strain SCRI 1043 / ATCC BAA-672) (Erwinia carotovora subsp. atroseptica).